We begin with the raw amino-acid sequence, 172 residues long: Trypsin inhibitor DE-3 (172 aa).

Cystine bridges form between cysteine 39-cysteine 83 and cysteine 132-cysteine 139.

Belongs to the protease inhibitor I3 (leguminous Kunitz-type inhibitor) family.

Inhibition of trypsin. The protein is Trypsin inhibitor DE-3 of Erythrina latissima (Broad-leaved coral tree).